Consider the following 371-residue polypeptide: Putative 8-amino-7-oxononanoate synthase (371 aa).

R21 lines the substrate pocket. 108-109 (GY) is a pyridoxal 5'-phosphate binding site. Residue H133 coordinates substrate. Residues S180, 205 to 208 (DDAH), and 234 to 237 (TLSK) contribute to the pyridoxal 5'-phosphate site. The residue at position 237 (K237) is an N6-(pyridoxal phosphate)lysine. T333 lines the substrate pocket.

Belongs to the class-II pyridoxal-phosphate-dependent aminotransferase family. BioF subfamily. In terms of assembly, homodimer. Requires pyridoxal 5'-phosphate as cofactor.

The catalysed reaction is 6-carboxyhexanoyl-[ACP] + L-alanine + H(+) = (8S)-8-amino-7-oxononanoate + holo-[ACP] + CO2. The protein operates within cofactor biosynthesis; biotin biosynthesis. In terms of biological role, catalyzes the decarboxylative condensation of pimeloyl-[acyl-carrier protein] and L-alanine to produce 8-amino-7-oxononanoate (AON), [acyl-carrier protein], and carbon dioxide. In Bacillus subtilis subsp. natto, this protein is Putative 8-amino-7-oxononanoate synthase (bioF).